Here is an 869-residue protein sequence, read N- to C-terminus: Bifunctional uridylyltransferase/uridylyl-removing enzyme (869 aa).

Positions 1 to 331 (MPTNLPALPM…FPSESQVTRV (331 aa)) are uridylyltransferase. The segment at 332–688 (INERFVERQG…ARISPAGEGL (357 aa)) is uridylyl-removing. Residues 450–572 (VDQHILMVVR…VGDERHLTAL (123 aa)) enclose the HD domain. ACT domains follow at residues 689–773 (QVAV…PSQG) and 800–869 (LLSL…ALEI).

This sequence belongs to the GlnD family. Mg(2+) is required as a cofactor.

It carries out the reaction [protein-PII]-L-tyrosine + UTP = [protein-PII]-uridylyl-L-tyrosine + diphosphate. It catalyses the reaction [protein-PII]-uridylyl-L-tyrosine + H2O = [protein-PII]-L-tyrosine + UMP + H(+). With respect to regulation, uridylyltransferase (UTase) activity is inhibited by glutamine, while glutamine activates uridylyl-removing (UR) activity. Modifies, by uridylylation and deuridylylation, the PII regulatory proteins (GlnB and homologs), in response to the nitrogen status of the cell that GlnD senses through the glutamine level. Under low glutamine levels, catalyzes the conversion of the PII proteins and UTP to PII-UMP and PPi, while under higher glutamine levels, GlnD hydrolyzes PII-UMP to PII and UMP (deuridylylation). Thus, controls uridylylation state and activity of the PII proteins, and plays an important role in the regulation of nitrogen assimilation and metabolism. This is Bifunctional uridylyltransferase/uridylyl-removing enzyme from Cupriavidus pinatubonensis (strain JMP 134 / LMG 1197) (Cupriavidus necator (strain JMP 134)).